Reading from the N-terminus, the 393-residue chain is Acetylornithine aminotransferase (393 aa).

Pyridoxal 5'-phosphate contacts are provided by residues 102 to 103 (GA) and Phe-136. N(2)-acetyl-L-ornithine is bound at residue Arg-139. Residue 219 to 222 (DEVQ) coordinates pyridoxal 5'-phosphate. Lys-248 carries the N6-(pyridoxal phosphate)lysine modification. Ser-274 contributes to the N(2)-acetyl-L-ornithine binding site. Thr-275 contributes to the pyridoxal 5'-phosphate binding site.

Belongs to the class-III pyridoxal-phosphate-dependent aminotransferase family. ArgD subfamily. Homodimer. The cofactor is pyridoxal 5'-phosphate.

It localises to the cytoplasm. It catalyses the reaction N(2)-acetyl-L-ornithine + 2-oxoglutarate = N-acetyl-L-glutamate 5-semialdehyde + L-glutamate. The protein operates within amino-acid biosynthesis; L-arginine biosynthesis; N(2)-acetyl-L-ornithine from L-glutamate: step 4/4. The polypeptide is Acetylornithine aminotransferase (Wolinella succinogenes (strain ATCC 29543 / DSM 1740 / CCUG 13145 / JCM 31913 / LMG 7466 / NCTC 11488 / FDC 602W) (Vibrio succinogenes)).